A 220-amino-acid polypeptide reads, in one-letter code: Iron-sulfur cluster repair protein YtfE (220 aa).

It belongs to the RIC family. YtfE subfamily. In terms of assembly, homodimer.

The protein localises to the cytoplasm. In terms of biological role, di-iron-containing protein involved in the repair of iron-sulfur clusters damaged by oxidative and nitrosative stress conditions. In Enterobacter sp. (strain 638), this protein is Iron-sulfur cluster repair protein YtfE.